Consider the following 310-residue polypeptide: GMP synthase [glutamine-hydrolyzing] subunit B (310 aa).

The 187-residue stretch at 1 to 187 (MSFSDYISRI…LGLPTDIQPF (187 aa)) folds into the GMPS ATP-PPase domain. 27–33 (SGGQDSS) contributes to the ATP binding site.

As to quaternary structure, heterodimer composed of a glutamine amidotransferase subunit (A) and a GMP-binding subunit (B).

The catalysed reaction is XMP + L-glutamine + ATP + H2O = GMP + L-glutamate + AMP + diphosphate + 2 H(+). It functions in the pathway purine metabolism; GMP biosynthesis; GMP from XMP (L-Gln route): step 1/1. Its function is as follows. Catalyzes the synthesis of GMP from XMP. In Thermoplasma volcanium (strain ATCC 51530 / DSM 4299 / JCM 9571 / NBRC 15438 / GSS1), this protein is GMP synthase [glutamine-hydrolyzing] subunit B (guaAB).